We begin with the raw amino-acid sequence, 297 residues long: Pyridoxal 5'-phosphate synthase subunit SNZ1 (297 aa).

Residue Asp-23 participates in D-ribose 5-phosphate binding. Lys-80 (schiff-base intermediate with D-ribose 5-phosphate) is an active-site residue. Residue Gly-152 participates in D-ribose 5-phosphate binding. Position 164 (Arg-164) interacts with D-glyceraldehyde 3-phosphate. Residues Gly-214 and 235–236 (GS) each bind D-ribose 5-phosphate.

It belongs to the PdxS/SNZ family. As to quaternary structure, homohexamer. Interacts with AIM18.

It carries out the reaction aldehydo-D-ribose 5-phosphate + D-glyceraldehyde 3-phosphate + L-glutamine = pyridoxal 5'-phosphate + L-glutamate + phosphate + 3 H2O + H(+). The protein operates within cofactor biosynthesis; pyridoxal 5'-phosphate biosynthesis. Its function is as follows. Catalyzes the formation of pyridoxal 5'-phosphate from ribose 5-phosphate (RBP), glyceraldehyde 3-phosphate (G3P) and ammonia. The ammonia is provided by a SNO isoform. Can also use ribulose 5-phosphate and dihydroxyacetone phosphate as substrates, resulting from enzyme-catalyzed isomerization of RBP and G3P, respectively. The protein is Pyridoxal 5'-phosphate synthase subunit SNZ1 (SNZ1) of Saccharomyces cerevisiae (strain ATCC 204508 / S288c) (Baker's yeast).